We begin with the raw amino-acid sequence, 365 residues long: tRNA (guanine(6)-N2)-methyltransferase (365 aa).

A THUMP domain is found at 69–182 (NENSRLLHRV…KDVFFLGIDT (114 aa)). S-adenosyl-L-methionine-binding positions include 198 to 202 (HPAHL), 228 to 230 (SGT), glutamate 248, 276 to 277 (DA), and asparagine 293.

This sequence belongs to the methyltransferase superfamily. In terms of assembly, monomer in solution.

The protein localises to the cytoplasm. The catalysed reaction is guanosine(6) in tRNA + S-adenosyl-L-methionine = N(2)-methylguanosine(6) in tRNA + S-adenosyl-L-homocysteine + H(+). In terms of biological role, S-adenosyl-L-methionine-dependent methyltransferase that catalyzes the methylation of the guanosine nucleotide at position 6 (m2G6) in tRNA(Phe). The sequence is that of tRNA (guanine(6)-N2)-methyltransferase from Pyrococcus furiosus (strain ATCC 43587 / DSM 3638 / JCM 8422 / Vc1).